Consider the following 389-residue polypeptide: Ribosomal RNA large subunit methyltransferase M (389 aa).

A compositionally biased stretch (polar residues) spans 1-13 (MIGNARMSQKYPT). Residues 1 to 24 (MIGNARMSQKYPTSSSRKRSPLSS) form a disordered region. S-adenosyl-L-methionine is bound by residues Ser-214, 247–250 (APGG), Asp-266, Asp-286, and Asp-302. Catalysis depends on Lys-331, which acts as the Proton acceptor.

This sequence belongs to the class I-like SAM-binding methyltransferase superfamily. RNA methyltransferase RlmE family. RlmM subfamily. Monomer.

The protein localises to the cytoplasm. It carries out the reaction cytidine(2498) in 23S rRNA + S-adenosyl-L-methionine = 2'-O-methylcytidine(2498) in 23S rRNA + S-adenosyl-L-homocysteine + H(+). In terms of biological role, catalyzes the 2'-O-methylation at nucleotide C2498 in 23S rRNA. This Hahella chejuensis (strain KCTC 2396) protein is Ribosomal RNA large subunit methyltransferase M.